Consider the following 489-residue polypeptide: Betaine aldehyde dehydrogenase (489 aa).

Residue Asn93 coordinates K(+). 150 to 152 (GAW) contributes to the NAD(+) binding site. Catalysis depends on Lys162, which acts as the Charge relay system. Residue 176-179 (KPSE) participates in NAD(+) binding. Position 180 (Val180) interacts with K(+). Residue 229 to 232 (EVGT) participates in NAD(+) binding. Leu245 serves as a coordination point for K(+). Residue Glu251 is the Proton acceptor of the active site. NAD(+) contacts are provided by Gly253, Cys285, and Glu386. Cys285 functions as the Nucleophile in the catalytic mechanism. Residue Cys285 is modified to Cysteine sulfenic acid (-SOH). 2 residues coordinate K(+): Lys456 and Gly459. Glu463 serves as the catalytic Charge relay system.

It belongs to the aldehyde dehydrogenase family. As to quaternary structure, dimer of dimers. It depends on K(+) as a cofactor.

It catalyses the reaction betaine aldehyde + NAD(+) + H2O = glycine betaine + NADH + 2 H(+). It functions in the pathway amine and polyamine biosynthesis; betaine biosynthesis via choline pathway; betaine from betaine aldehyde: step 1/1. Its function is as follows. Involved in the biosynthesis of the osmoprotectant glycine betaine. Catalyzes the irreversible oxidation of betaine aldehyde to the corresponding acid. The polypeptide is Betaine aldehyde dehydrogenase (Chromohalobacter salexigens (strain ATCC BAA-138 / DSM 3043 / CIP 106854 / NCIMB 13768 / 1H11)).